A 656-amino-acid polypeptide reads, in one-letter code: Membrane-associated tyrosine- and threonine-specific cdc2-inhibitory kinase wee-1.3 (656 aa).

The segment covering 1-11 (MDETENNTSID) has biased composition (polar residues). The disordered stretch occupies residues 1–24 (MDETENNTSIDSVEVGPSSPRVVA). The Protein kinase domain occupies 107-354 (FQIDEIIGRG…SDALRKHLSI (248 aa)). ATP contacts are provided by residues 113–121 (IGRGSFGEV) and lysine 136. The active-site Proton acceptor is aspartate 227. The Mg(2+) site is built by asparagine 232 and aspartate 245. 2 disordered regions span residues 449 to 552 (PFDF…NSSI) and 617 to 656 (KGKE…GDEN). Positions 486 to 505 (ATCSSSNSSAIETAEDSLSS) are enriched in polar residues. The segment covering 617-631 (KGKEKPVVEPAELRQ) has biased composition (basic and acidic residues). A compositionally biased stretch (polar residues) spans 646–656 (ASFQGSSGDEN).

This sequence belongs to the protein kinase superfamily. Ser/Thr protein kinase family. WEE1 subfamily.

The protein resides in the golgi apparatus membrane. It is found in the cytoplasm. The enzyme catalyses L-seryl-[protein] + ATP = O-phospho-L-seryl-[protein] + ADP + H(+). The catalysed reaction is L-threonyl-[protein] + ATP = O-phospho-L-threonyl-[protein] + ADP + H(+). Acts as a negative regulator of entry into mitosis (G2 to M transition) by phosphorylation of the CDK1 kinase during oocyte maturation. Required for embryonic development, germline proliferation and initiation of meiosis during spermatogenesis. Required for chromosome structure during mitosis and negative regulation of nuclear envelope breakdown. The polypeptide is Membrane-associated tyrosine- and threonine-specific cdc2-inhibitory kinase wee-1.3 (Caenorhabditis briggsae).